The following is a 293-amino-acid chain: 4-hydroxy-tetrahydrodipicolinate synthase (293 aa).

A pyruvate-binding site is contributed by Thr-45. Tyr-133 serves as the catalytic Proton donor/acceptor. Residue Lys-161 is the Schiff-base intermediate with substrate of the active site. Residue Ile-203 coordinates pyruvate.

This sequence belongs to the DapA family. Homotetramer; dimer of dimers.

It localises to the cytoplasm. The enzyme catalyses L-aspartate 4-semialdehyde + pyruvate = (2S,4S)-4-hydroxy-2,3,4,5-tetrahydrodipicolinate + H2O + H(+). Its pathway is amino-acid biosynthesis; L-lysine biosynthesis via DAP pathway; (S)-tetrahydrodipicolinate from L-aspartate: step 3/4. Its function is as follows. Catalyzes the condensation of (S)-aspartate-beta-semialdehyde [(S)-ASA] and pyruvate to 4-hydroxy-tetrahydrodipicolinate (HTPA). The chain is 4-hydroxy-tetrahydrodipicolinate synthase from Shewanella denitrificans (strain OS217 / ATCC BAA-1090 / DSM 15013).